Reading from the N-terminus, the 90-residue chain is Probable Fe(2+)-trafficking protein (90 aa).

The protein belongs to the Fe(2+)-trafficking protein family.

Its function is as follows. Could be a mediator in iron transactions between iron acquisition and iron-requiring processes, such as synthesis and/or repair of Fe-S clusters in biosynthetic enzymes. This chain is Probable Fe(2+)-trafficking protein, found in Aliivibrio salmonicida (strain LFI1238) (Vibrio salmonicida (strain LFI1238)).